Here is an 80-residue protein sequence, read N- to C-terminus: Small membrane A-kinase anchor protein (80 aa).

Residue Gly2 is the site of N-myristoyl glycine attachment.

The protein belongs to the small membrane AKAP family. Post-translationally, may be palmitoylated at Cys-3.

Its subcellular location is the cell membrane. In terms of biological role, binds to type I regulatory subunits of protein kinase A and may anchor/target them to the plasma membrane. This Tetraodon nigroviridis (Spotted green pufferfish) protein is Small membrane A-kinase anchor protein.